The sequence spans 952 residues: Bifunctional ent-kaurene synthase (952 aa).

The DXDD B-type cyclization motif signature appears at 328–331; the sequence is DVDD. 6 residues coordinate Mg(2+): Asp-668, Glu-672, Asn-848, Asp-849, Ser-852, and Asp-856. The DEXXE A-type cyclization motif signature appears at 668 to 672; the sequence is DEYME.

The protein belongs to the terpene synthase family. The cofactor is Mg(2+).

It catalyses the reaction ent-copalyl diphosphate = ent-kaur-16-ene + diphosphate. It carries out the reaction (2E,6E,10E)-geranylgeranyl diphosphate = ent-copalyl diphosphate. It participates in plant hormone biosynthesis; gibberellin biosynthesis. Its function is as follows. Bifunctional ent-kaurene synthase; part of the gene cluster that mediates the biosynthesis of gibberellins (GAs), diterpenoids that may provide a selective advantage during infection of the preferred host plant, rice. Gibberellins (GAs) are diterpenoids and are synthesized via the mevalonate pathway. Biosynthesis of the major metabolite GA3 (gibberellic acid) from geranylgeranyl diphosphate (GGPP) requires 13 steps. The GGPP produced by the geranylgeranyl diphosphate synthase GGS2 is converted to ent-kaurene via ent-copalyldiphosphate in a two-step cyclization reaction performed by the bifunctional ent-copalyl diphosphate synthase/ent-kaurene synthase enzyme (CPS/KS). Ent-Kaurene is metabolized to GAs by a series of oxidation reactions catalyzed by cytochrome P450 monooxygenases. Cytochrome P450 monooxygenase P450-4 is an ent-kaurene oxidase that catalyzes the three oxidation steps between ent-kaurene and ent-kaurenoic acid. The highly multifunctional cytochrome P450 monooxygenase P450-1 then catalyzes four steps involving oxidation at two carbon atoms, in the main pathway from ent-kaurenoic acid to GA14 via GA12-aldehyde as well as producing kaurenolides and fujenoic acids as by-products. The cytochrome P450 monooxygenase P450-2 then converts GA14 to GA4 by removal of C-20. GA4 is further converted to GA7 by the GA4 desaturase DES via 1,2-desaturation before cytochrome P450 monooxygenase P450-3, a 13-hydroxylase, hydroxylates GA7 to GA3, the final product of the GA-biosynthetic pathway. The sequence is that of Bifunctional ent-kaurene synthase from Gibberella fujikuroi (strain CBS 195.34 / IMI 58289 / NRRL A-6831) (Bakanae and foot rot disease fungus).